Here is a 360-residue protein sequence, read N- to C-terminus: DNA replication and repair protein RecF (360 aa).

33 to 40 (GENGSGKT) is a binding site for ATP.

This sequence belongs to the RecF family.

Its subcellular location is the cytoplasm. The RecF protein is involved in DNA metabolism; it is required for DNA replication and normal SOS inducibility. RecF binds preferentially to single-stranded, linear DNA. It also seems to bind ATP. In Rickettsia peacockii (strain Rustic), this protein is DNA replication and repair protein RecF.